The primary structure comprises 118 residues: MFKNMMENMNNKKIAMIIIIFYVITSMVQGNYHFAILGAYFIIKNIFEYKFNKGIELPSINYTIIGTIIGQYTVLIIMIFCRDNFSDNPYIEQILTTNLSIVGYAFGSFWYRCITTQN.

A run of 3 helical transmembrane segments spans residues 17–37, 60–80, and 90–110; these read IIII…FAIL, INYT…IMIF, and YIEQ…GSFW.

Its subcellular location is the membrane. This is an uncharacterized protein from Acanthamoeba polyphaga mimivirus (APMV).